The sequence spans 1165 residues: Activity-dependent neuroprotector homeobox protein 2 (1165 aa).

A C2H2-type 1 zinc finger spans residues 73-96 (YCCSLCRYSTKVLTSLKNHLHRYH). Residues 106 to 128 (IPCPNCPFSSQPRVVGKHFRMFH) form a C2H2-type 2; degenerate zinc finger. Lys-146 participates in a covalent cross-link: Glycyl lysine isopeptide (Lys-Gly) (interchain with G-Cter in SUMO2). The C2H2-type 3; degenerate zinc-finger motif lies at 155 to 178 (FTCLKCNFSNTLYYSMKKHVLVAH). The C2H2-type 4 zinc-finger motif lies at 215 to 240 (YYCKKCSAIASSQDALMYHILTSDAH). Residues 303-318 (SGTVQSVTVTPGTSGS) are compositionally biased toward low complexity. Residues 303-327 (SGTVQSVTVTPGTSGSLTHSPPTTA) are disordered. The C2H2-type 5; degenerate zinc-finger motif lies at 696 to 718 (KTCPVCNELFPSNVYQVHMEVAH). A C2H2-type 6; degenerate zinc finger spans residues 724 to 746 (QLCQVCNELFPANVYQVHMEVAH). The C2H2-type 7; degenerate zinc finger occupies 777–798 (VRCLSCKCLVSQEELMHHLLMH). 2 C2H2-type zinc fingers span residues 800-823 (LGCL…RTKH) and 905-935 (LTCP…PTVH). The segment at 1005 to 1068 (PVKRKLPEGH…SGPSEDSLQA (64 aa)) is disordered. Glycyl lysine isopeptide (Lys-Gly) (interchain with G-Cter in SUMO2) cross-links involve residues Lys-1009 and Lys-1048. A compositionally biased stretch (basic and acidic residues) spans 1009 to 1024 (KLPEGHLGPEDQRDGE). Positions 1090-1132 (DYFHRRPYPSRKEVELLSSLLWVWKIDVASFFGKRRYICMKAI) form a DNA-binding region, homeobox.

Belongs to the krueppel C2H2-type zinc-finger protein family. In terms of assembly, may interact with SMARCA4/BRG1. In terms of tissue distribution, expressed widely, with the highest level in the brain.

The protein resides in the nucleus. Its function is as follows. May be involved in transcriptional regulation. May play a role in neuronal function; perhaps involved in protection of brain tissues from oxidative stress. May be involved in erythroid differentiation. In Mus musculus (Mouse), this protein is Activity-dependent neuroprotector homeobox protein 2 (Adnp2).